A 325-amino-acid polypeptide reads, in one-letter code: Peroxidase 47 (325 aa).

Positions 1 to 36 are cleaved as a signal peptide; sequence MLTRFKKQNNKMVRANIVSMVLLMHAIVGFPFHARG. 4 cysteine pairs are disulfide-bonded: Cys46-Cys125, Cys79-Cys84, Cys131-Cys321, and Cys209-Cys235. The Proton acceptor role is filled by His77. Positions 78, 83, 85, and 87 each coordinate Ca(2+). Pro172 serves as a coordination point for substrate. N-linked (GlcNAc...) asparagine glycosylation is present at Asn177. His202 contacts heme b. Thr203 lines the Ca(2+) pocket. Asp246, Thr248, and Asp253 together coordinate Ca(2+).

The protein belongs to the peroxidase family. Classical plant (class III) peroxidase subfamily. Heme b is required as a cofactor. It depends on Ca(2+) as a cofactor.

Its subcellular location is the secreted. The catalysed reaction is 2 a phenolic donor + H2O2 = 2 a phenolic radical donor + 2 H2O. Removal of H(2)O(2), oxidation of toxic reductants, biosynthesis and degradation of lignin, suberization, auxin catabolism, response to environmental stresses such as wounding, pathogen attack and oxidative stress. These functions might be dependent on each isozyme/isoform in each plant tissue. The sequence is that of Peroxidase 47 (PER47) from Arabidopsis thaliana (Mouse-ear cress).